A 478-amino-acid polypeptide reads, in one-letter code: MAQSKLYPVVMAGGSGSRLWPLSRVLYPKQFLCLKGDLTMLQTTICRLNGVECESPVVICNEQHRFIVAEQLRQLNKLTENIILEPAGRNTAPAIALAALAAKRHSPESDPLMLVLAADHVIADEDAFRAAVRNAMPYAEAGKLVTFGIVPDLPETGYGYIRRGEVSAGEQDMVAFEVAQFVEKPNLETAQAYVASGEYYWNSGMFLFRAGRYLEELKKYRPDILDACEKAMSAVDPDLNFIRVDEEAFLACPEESVDYAVMERTADAVVVPMDAGWSDVGSWSSLWEISAHTAEGNVCHGDVINHKTENSYVYAESGLVTTVGVKDLVVVQTKDAVLIADRNAVQDVKKVVEQIKADGRHEHRVHREVYRPWGKYDSIDAGDRYQVKRITVKPGEGLSVQMHHHRAEHWVVVAGTAKVTIDGDIKLLGENESIYIPLGATHCLENPGKIPLDLIEVRSGSYLEEDDVVRFADRYGRV.

The protein belongs to the mannose-6-phosphate isomerase type 2 family.

It carries out the reaction alpha-D-mannose 1-phosphate + GTP + H(+) = GDP-alpha-D-mannose + diphosphate. The protein operates within nucleotide-sugar biosynthesis; GDP-alpha-D-mannose biosynthesis; GDP-alpha-D-mannose from alpha-D-mannose 1-phosphate (GTP route): step 1/1. Its function is as follows. Involved in the biosynthesis of the capsular polysaccharide colanic acid. The sequence is that of Mannose-1-phosphate guanylyltransferase (manC) from Escherichia coli (strain K12).